The chain runs to 82 residues: DNA-directed RNA polymerase subunit Rpo5 (82 aa).

The protein belongs to the archaeal Rpo5/eukaryotic RPB5 RNA polymerase subunit family. As to quaternary structure, part of the RNA polymerase complex.

The protein resides in the cytoplasm. It catalyses the reaction RNA(n) + a ribonucleoside 5'-triphosphate = RNA(n+1) + diphosphate. Functionally, DNA-dependent RNA polymerase (RNAP) catalyzes the transcription of DNA into RNA using the four ribonucleoside triphosphates as substrates. The polypeptide is DNA-directed RNA polymerase subunit Rpo5 (Thermococcus onnurineus (strain NA1)).